The following is a 371-amino-acid chain: Cytochrome b (371 aa).

The next 4 membrane-spanning stretches (helical) occupy residues 25–45 (FGSLLLTCLMLQILTGFFLAI), 69–90 (WIMQNTHAIGASLFFICIYTHI), 105–125 (WLSGTTLLIILMATAFFGYVL), and 170–190 (FFALHFILPFIIISMSSIHII). The heme b site is built by histidine 75 and histidine 89. Heme b is bound by residues histidine 174 and histidine 188. Histidine 193 serves as a coordination point for a ubiquinone. The next 4 helical transmembrane spans lie at 218–238 (YKDMTMVSIMIMLLLMVMTFA), 280–300 (LGGTLALFLSIIILTTTPFTH), 312–332 (LTQILFWTLIATFTTITWTAT), and 339–358 (FIYISQMTSIMYFSFFIMNP).

It belongs to the cytochrome b family. The cytochrome bc1 complex contains 3 respiratory subunits (MT-CYB, CYC1 and UQCRFS1), 2 core proteins (UQCRC1 and UQCRC2) and probably 6 low-molecular weight proteins. Heme b serves as cofactor.

The protein localises to the mitochondrion inner membrane. In terms of biological role, component of the ubiquinol-cytochrome c reductase complex (complex III or cytochrome b-c1 complex) that is part of the mitochondrial respiratory chain. The b-c1 complex mediates electron transfer from ubiquinol to cytochrome c. Contributes to the generation of a proton gradient across the mitochondrial membrane that is then used for ATP synthesis. The chain is Cytochrome b (MT-CYB) from Micruroides euryxanthus (Sonoran coral snake).